The sequence spans 110 residues: Large ribosomal subunit protein uL22 (110 aa).

The protein belongs to the universal ribosomal protein uL22 family. As to quaternary structure, part of the 50S ribosomal subunit.

Its function is as follows. This protein binds specifically to 23S rRNA; its binding is stimulated by other ribosomal proteins, e.g. L4, L17, and L20. It is important during the early stages of 50S assembly. It makes multiple contacts with different domains of the 23S rRNA in the assembled 50S subunit and ribosome. The globular domain of the protein is located near the polypeptide exit tunnel on the outside of the subunit, while an extended beta-hairpin is found that lines the wall of the exit tunnel in the center of the 70S ribosome. The polypeptide is Large ribosomal subunit protein uL22 (Desulfotalea psychrophila (strain LSv54 / DSM 12343)).